Reading from the N-terminus, the 291-residue chain is 33 kDa chaperonin (291 aa).

Cystine bridges form between C229–C231 and C262–C265.

This sequence belongs to the HSP33 family. Under oxidizing conditions two disulfide bonds are formed involving the reactive cysteines. Under reducing conditions zinc is bound to the reactive cysteines and the protein is inactive.

The protein localises to the cytoplasm. In terms of biological role, redox regulated molecular chaperone. Protects both thermally unfolding and oxidatively damaged proteins from irreversible aggregation. Plays an important role in the bacterial defense system toward oxidative stress. In Vibrio vulnificus (strain YJ016), this protein is 33 kDa chaperonin.